Here is a 453-residue protein sequence, read N- to C-terminus: Carbamoyl phosphate synthase arginine-specific small chain (453 aa).

A mitochondrion-targeting transit peptide spans methionine 1–alanine 13. Residues histidine 233–alanine 420 enclose the Glutamine amidotransferase type-1 domain. Cysteine 309 serves as the catalytic Nucleophile. Residues histidine 393 and glutamate 395 contribute to the active site.

This sequence belongs to the CarA family. Heterodimer composed of 2 chains; the small (or glutamine) chain promotes the hydrolysis of glutamine to ammonia, which is used by the large (or ammonia) chain to synthesize carbamoyl phosphate.

The protein resides in the mitochondrion matrix. It catalyses the reaction hydrogencarbonate + L-glutamine + 2 ATP + H2O = carbamoyl phosphate + L-glutamate + 2 ADP + phosphate + 2 H(+). The enzyme catalyses L-glutamine + H2O = L-glutamate + NH4(+). Its pathway is amino-acid biosynthesis; L-arginine biosynthesis; carbamoyl phosphate from bicarbonate: step 1/1. Small subunit of the arginine-specific carbamoyl phosphate synthase (CPSase). CPSase catalyzes the formation of carbamoyl phosphate from the ammonia moiety of glutamine, carbonate, and phosphate donated by ATP, the first step of the arginine biosynthetic pathway. The small subunit (glutamine amidotransferase) binds and cleaves glutamine to supply the large subunit with the substrate ammonia. This Hypocrea virens (Gliocladium virens) protein is Carbamoyl phosphate synthase arginine-specific small chain (cpa1).